Here is a 405-residue protein sequence, read N- to C-terminus: Envelope glycoprotein M (405 aa).

The Intravirion segment spans residues Met1–Thr17. The helical transmembrane segment at Leu18–Pro38 threads the bilayer. Residues Asn39–Glu76 are Virion surface-facing. A helical membrane pass occupies residues Met77–Cys97. The Intravirion segment spans residues Gly98–Ala121. A helical membrane pass occupies residues Val122 to Ile142. Residues Gln143–His149 are Virion surface-facing. Residues Val150–Ala170 traverse the membrane as a helical segment. At Cys171–Thr192 the chain is on the intravirion side. A helical transmembrane segment spans residues Phe193–Leu215. The Virion surface portion of the chain corresponds to Glu216–Asn245. Residues Leu246 to Leu266 traverse the membrane as a helical segment. Residue Arg267 is a topological domain, intravirion. The chain crosses the membrane as a helical span at residues His268–Val288. At Arg289 to Leu299 the chain is on the virion surface side. The chain crosses the membrane as a helical span at residues His300–Ile320. Residues Arg321–Pro405 are Intravirion-facing. A disordered region spans residues Leu346–Pro405. Residues Gln386 to Thr397 show a composition bias toward polar residues.

It belongs to the herpesviridae glycoprotein M family. In terms of assembly, interacts (via N-terminus) with gN (via N-terminus). The gM-gN heterodimer forms the gCII complex.

The protein localises to the virion membrane. It localises to the host Golgi apparatus. Its subcellular location is the host trans-Golgi network. The protein resides in the host endosome membrane. It is found in the host nucleus inner membrane. In terms of biological role, envelope glycoprotein important for virion assembly and egress. Plays a role in the correct incorporation of gH-gL into virion membrane. Directs the glycoprotein N (gN) to the host trans-Golgi network. In Epstein-Barr virus (strain B95-8) (HHV-4), this protein is Envelope glycoprotein M.